A 543-amino-acid chain; its full sequence is Protein lin-14 (543 aa).

Disordered regions lie at residues 165 to 228 (PNGH…SSNH) and 268 to 291 (APAT…PRKP). The segment covering 177–213 (SMQTDEQQVKWSSPSSVDSNGQKTDSSAASAGDNQNI) has biased composition (polar residues). Positions 268 to 282 (APATNGTTNGATKAA) are enriched in low complexity.

Post-translationally, cleaved by caspase ced-3 in vitro.

It localises to the nucleus. In terms of biological role, heterochronic protein which controls the choice of stage specific cell fates. Involved in the temporal progression of vulval fate patterning, possibly by inhibiting lin-12. Acts as a transcription factor involved in the stage-specific repression of insulin/insulin-like growth factor gene ins-33. In Caenorhabditis briggsae, this protein is Protein lin-14 (lin-14).